Here is a 304-residue protein sequence, read N- to C-terminus: Secreted mono- and diacylglycerol lipase LIP1 (304 aa).

An N-terminal signal peptide occupies residues 1–19 (MLFSRFVLLAFGSVAAVSA). O-linked (Man...) threonine glycosylation occurs at Thr32. Cys57 and Cys297 form a disulfide bridge. Ser171 functions as the Nucleophile in the catalytic mechanism. The active site involves Asp228. Asn253 is a glycosylation site (N-linked (GlcNAc...) asparagine). His281 is a catalytic residue.

The protein belongs to the AB hydrolase superfamily. Lipase family. Class 3 subfamily.

Its subcellular location is the secreted. It is found in the cell wall. The catalysed reaction is a monoacylglycerol + H2O = glycerol + a fatty acid + H(+). The enzyme catalyses a diacylglycerol + H2O = a monoacylglycerol + a fatty acid + H(+). Its activity is regulated as follows. RHC 80267, a well-known inhibitor of diacylglycerol lipases from mammals, also acts as an inhibitor for LIP1/SMG1. Functionally, secreted lipase involved in Dandruff and seborrheic dermatitis (D/SD) probably via lipase-mediated breakdown of sebaceous lipids and release of irritating free fatty acids. Shows activity against monoglyceride and diglyceride substrates, but not triglyceride substrates and does not exhibit regio-selective production of diacylglycerols. Able to hydrolyze diacylglycerols such as distearin, dilinolein, dipalmitoylglycerol and dipalmitolein. Cleaves oleic acid from 1,2 isomers of diolein on both the 1 and the 2 position of the glycerol backbone, resulting mainly in free fatty acids but no monoolein is detected. Shows activity on monoolein and liberates mostly free fatty acids, but can also perform the reverse reaction and produce diolein. The protein is Secreted mono- and diacylglycerol lipase LIP1 of Malassezia globosa (strain ATCC MYA-4612 / CBS 7966) (Dandruff-associated fungus).